Reading from the N-terminus, the 275-residue chain is Exosome complex component Rrp42 (275 aa).

It belongs to the RNase PH family. Rrp42 subfamily. Component of the archaeal exosome complex. Forms a hexameric ring-like arrangement composed of 3 Rrp41-Rrp42 heterodimers. The hexameric ring associates with a trimer of Rrp4 and/or Csl4 subunits.

It is found in the cytoplasm. Its function is as follows. Non-catalytic component of the exosome, which is a complex involved in RNA degradation. Contributes to the structuring of the Rrp41 active site. The protein is Exosome complex component Rrp42 of Saccharolobus islandicus (strain M.16.27) (Sulfolobus islandicus).